Here is a 184-residue protein sequence, read N- to C-terminus: CDP-archaeol synthase (184 aa).

5 helical membrane passes run 4–24 (IIMV…NPGA), 54–74 (FIGG…IIYI), 86–106 (IISA…GDIT), 122–142 (GSLL…FIFA), and 145–165 (FFLE…LTPP).

This sequence belongs to the CDP-archaeol synthase family. Requires Mg(2+) as cofactor.

It localises to the cell membrane. It catalyses the reaction 2,3-bis-O-(geranylgeranyl)-sn-glycerol 1-phosphate + CTP + H(+) = CDP-2,3-bis-O-(geranylgeranyl)-sn-glycerol + diphosphate. It participates in membrane lipid metabolism; glycerophospholipid metabolism. Functionally, catalyzes the formation of CDP-2,3-bis-(O-geranylgeranyl)-sn-glycerol (CDP-archaeol) from 2,3-bis-(O-geranylgeranyl)-sn-glycerol 1-phosphate (DGGGP) and CTP. This reaction is the third ether-bond-formation step in the biosynthesis of archaeal membrane lipids. The chain is CDP-archaeol synthase from Picrophilus torridus (strain ATCC 700027 / DSM 9790 / JCM 10055 / NBRC 100828 / KAW 2/3).